The following is a 130-amino-acid chain: Ribosome-binding factor A (130 aa).

Residues 111–130 (RDLDDVGPEATSSDEDAEQR) form a disordered region.

Belongs to the RbfA family. Monomer. Binds 30S ribosomal subunits, but not 50S ribosomal subunits or 70S ribosomes.

It is found in the cytoplasm. One of several proteins that assist in the late maturation steps of the functional core of the 30S ribosomal subunit. Associates with free 30S ribosomal subunits (but not with 30S subunits that are part of 70S ribosomes or polysomes). Required for efficient processing of 16S rRNA. May interact with the 5'-terminal helix region of 16S rRNA. This is Ribosome-binding factor A from Xanthomonas axonopodis pv. citri (strain 306).